We begin with the raw amino-acid sequence, 1312 residues long: Kinesin-like protein KIF16B (1312 aa).

The Kinesin motor domain occupies 3 to 358 (SVKVAVRVRP…LRYANRAKNI (356 aa)). Residue 102-109 (GQTGSGKS) coordinates ATP. Positions 366–425 (EDANVKLIRELRAEIARLKTLLAQGNQIALLDSPTALSMEEKLHQNEARVQELTKEWTNK) form a coiled coil. At Ser-398 the chain carries Phosphoserine. The 65-residue stretch at 480–544 (VGREDASTEQ…LNQGAVILLG (65 aa)) folds into the FHA domain. The residue at position 577 (Thr-577) is a Phosphothreonine. 4 positions are modified to phosphoserine: Ser-582, Ser-838, Ser-1047, and Ser-1145. Coiled-coil stretches lie at residues 835–913 (KLAS…LQNH) and 941–1073 (QVEK…KQKI). In terms of domain architecture, PX spans 1177 to 1291 (DPIKISIPRY…KVGLTLSKHT (115 aa)).

This sequence belongs to the TRAFAC class myosin-kinesin ATPase superfamily. Kinesin family. Interacts with PTPN21. Interacts with RAB14.

It is found in the cytoplasm. It localises to the cytoskeleton. The protein resides in the early endosome membrane. The protein localises to the spindle. In terms of biological role, plus end-directed microtubule-dependent motor protein involved in endosome transport and receptor recycling and degradation. Regulates the plus end motility of early endosomes and the balance between recycling and degradation of receptors such as EGF receptor (EGFR) and FGF receptor (FGFR). Regulates the Golgi to endosome transport of FGFR-containing vesicles during early development, a key process for developing basement membrane and epiblast and primitive endoderm lineages during early postimplantation development. The sequence is that of Kinesin-like protein KIF16B (Kif16b) from Mus musculus (Mouse).